The primary structure comprises 290 residues: 4-hydroxy-tetrahydrodipicolinate synthase (290 aa).

T44 serves as a coordination point for pyruvate. Y132 acts as the Proton donor/acceptor in catalysis. K160 serves as the catalytic Schiff-base intermediate with substrate. I202 lines the pyruvate pocket.

Belongs to the DapA family. Homotetramer; dimer of dimers.

Its subcellular location is the cytoplasm. It carries out the reaction L-aspartate 4-semialdehyde + pyruvate = (2S,4S)-4-hydroxy-2,3,4,5-tetrahydrodipicolinate + H2O + H(+). It functions in the pathway amino-acid biosynthesis; L-lysine biosynthesis via DAP pathway; (S)-tetrahydrodipicolinate from L-aspartate: step 3/4. Its function is as follows. Catalyzes the condensation of (S)-aspartate-beta-semialdehyde [(S)-ASA] and pyruvate to 4-hydroxy-tetrahydrodipicolinate (HTPA). In Alkaliphilus oremlandii (strain OhILAs) (Clostridium oremlandii (strain OhILAs)), this protein is 4-hydroxy-tetrahydrodipicolinate synthase.